A 455-amino-acid polypeptide reads, in one-letter code: Gamma-aminobutyric acid receptor subunit alpha-1 (455 aa).

The N-terminal stretch at 1-27 (MKKSRGLSDYLWAWTLILSTLSGRSYG) is a signal peptide. The Extracellular portion of the chain corresponds to 28–252 (QPSQDELKDN…FHLKRKIGYF (225 aa)). N-linked (GlcNAc...) asparagine glycosylation occurs at Asn37. Residue Arg93 participates in 4-aminobutanoate binding. Asn137 carries an N-linked (GlcNAc...) asparagine glycan. Thr156 provides a ligand contact to 4-aminobutanoate. A disulfide bridge links Cys165 with Cys179. A helical membrane pass occupies residues 253 to 273 (VIQTYLPCIMTVILSQVSFWL). At 274-278 (NRESV) the chain is on the cytoplasmic side. A helical membrane pass occupies residues 279–300 (PARTVFGVTTVLTMTTLSISAR). At 301–310 (NSLPKVAYAT) the chain is on the extracellular side. The helical transmembrane segment at 311 to 332 (AMDWFIAVCYAFVFSALIEFAT) threads the bilayer. At 333–420 (VNYFTKRGYA…TFNSVSKIDR (88 aa)) the chain is on the cytoplasmic side. Residues 421-440 (LSRIAFPLLFGIFNLVYWAT) form a helical membrane-spanning segment. Residues 441–455 (YLNREPQLKAPTPHQ) lie on the Extracellular side of the membrane.

The protein belongs to the ligand-gated ion channel (TC 1.A.9) family. Gamma-aminobutyric acid receptor (TC 1.A.9.5) subfamily. GABRA1 sub-subfamily. In terms of assembly, heteropentamer, formed by a combination of alpha (GABRA1-6), beta (GABRB1-3), gamma (GABRG1-3), delta (GABRD), epsilon (GABRE), rho (GABRR1-3), pi (GABRP) and theta (GABRQ) subunits, each subunit exhibiting distinct physiological and pharmacological properties. Interacts with UBQLN1. Interacts with TRAK1. Interacts with KIF21B. Identified in a complex of 720 kDa composed of LHFPL4, NLGN2, GABRA1, GABRB2, GABRG2 and GABRB3. Interacts with LHFPL4. Interacts with NLGN2. Interacts with SHISA7; interaction leads to the regulation of GABA(A) receptor trafficking, channel deactivation kinetics and pharmacology. In terms of processing, glycosylated. Expressed in the cerebellum.

Its subcellular location is the postsynaptic cell membrane. The protein localises to the cell membrane. It localises to the cytoplasmic vesicle membrane. It catalyses the reaction chloride(in) = chloride(out). Its activity is regulated as follows. Allosterically activated by benzodiazepines, the neuroanesthetic alphaxalone and pentobarbital. Inhibited by the antagonist bicuculline. Potentiated by histamine. Alpha subunit of the heteropentameric ligand-gated chloride channel gated by Gamma-aminobutyric acid (GABA), a major inhibitory neurotransmitter in the brain. GABA-gated chloride channels, also named GABA(A) receptors (GABAAR), consist of five subunits arranged around a central pore and contain GABA active binding site(s) located at the alpha and beta subunit interface(s). When activated by GABA, GABAARs selectively allow the flow of chloride anions across the cell membrane down their electrochemical gradient. Alpha-1/GABRA1-containing GABAARs are largely synaptic. Chloride influx into the postsynaptic neuron following GABAAR opening decreases the neuron ability to generate a new action potential, thereby reducing nerve transmission. GABAARs containing alpha-1 and beta-2 or -3 subunits exhibit synaptogenic activity; the gamma-2 subunit being necessary but not sufficient to induce rapid synaptic contacts formation. GABAARs function also as histamine receptor where histamine binds at the interface of two neighboring beta subunits and potentiates GABA response. GABAARs containing alpha, beta and epsilon subunits also permit spontaneous chloride channel activity while preserving the structural information required for GABA-gated openings. Alpha-1-mediated plasticity in the orbitofrontal cortex regulates context-dependent action selection. Together with rho subunits, may also control neuronal and glial GABAergic transmission in the cerebellum. The polypeptide is Gamma-aminobutyric acid receptor subunit alpha-1 (Mus musculus (Mouse)).